A 221-amino-acid chain; its full sequence is Phosphoribosylformylglycinamidine synthase subunit PurQ (221 aa).

A Glutamine amidotransferase type-1 domain is found at 5–221 (TVGIVVFPGS…LYTLRSLITQ (217 aa)). The Nucleophile role is filled by cysteine 89. Catalysis depends on residues histidine 197 and glutamate 199.

As to quaternary structure, part of the FGAM synthase complex composed of 1 PurL, 1 PurQ and 2 PurS subunits.

The protein localises to the cytoplasm. It catalyses the reaction N(2)-formyl-N(1)-(5-phospho-beta-D-ribosyl)glycinamide + L-glutamine + ATP + H2O = 2-formamido-N(1)-(5-O-phospho-beta-D-ribosyl)acetamidine + L-glutamate + ADP + phosphate + H(+). The enzyme catalyses L-glutamine + H2O = L-glutamate + NH4(+). It participates in purine metabolism; IMP biosynthesis via de novo pathway; 5-amino-1-(5-phospho-D-ribosyl)imidazole from N(2)-formyl-N(1)-(5-phospho-D-ribosyl)glycinamide: step 1/2. Part of the phosphoribosylformylglycinamidine synthase complex involved in the purines biosynthetic pathway. Catalyzes the ATP-dependent conversion of formylglycinamide ribonucleotide (FGAR) and glutamine to yield formylglycinamidine ribonucleotide (FGAM) and glutamate. The FGAM synthase complex is composed of three subunits. PurQ produces an ammonia molecule by converting glutamine to glutamate. PurL transfers the ammonia molecule to FGAR to form FGAM in an ATP-dependent manner. PurS interacts with PurQ and PurL and is thought to assist in the transfer of the ammonia molecule from PurQ to PurL. The polypeptide is Phosphoribosylformylglycinamidine synthase subunit PurQ (Prochlorococcus marinus subsp. pastoris (strain CCMP1986 / NIES-2087 / MED4)).